The chain runs to 216 residues: Splicing factor U2AF 23 kDa subunit (216 aa).

The segment at 12–40 adopts a C3H1-type 1 zinc-finger fold; the sequence is EQDKVNCSFYYKIGACRHGERCSRKHVKP. The 98-residue stretch at 44–141 folds into the RRM domain; that stretch reads QTILCPNMYK…RPVYAELSPV (98 aa). The segment at 143 to 170 adopts a C3H1-type 2 zinc-finger fold; it reads DFREACCRQHETSECQRGGLCNFMHAKK. The segment at 194-216 is disordered; the sequence is EMKKEPNSDSTNRWVSVTAERKN.

In terms of assembly, forms a heterodimer with the U2AF large subunit. Can also form a homodimer. U2AF large subunit (U2AF59), U2AF small subunit (U2AF23) and SF1 (bpb1) interact to form a complex required for complex A formation. Interacts with cwf13.

Its subcellular location is the nucleus. In terms of biological role, necessary for the splicing of pre-mRNA. The SF1-U2AF59-U2AF23 complex has a role in the recognition of the branch site (5'-UACUAAC-3'), the pyrimidine tract and the 3'-splice site at the 3'-end of introns. In Schizosaccharomyces pombe (strain 972 / ATCC 24843) (Fission yeast), this protein is Splicing factor U2AF 23 kDa subunit.